We begin with the raw amino-acid sequence, 419 residues long: N-acylglucosamine 2-epimerase (419 aa).

The interval 185–206 (LLNLVEQLGEEDEEMTDKYAEL) is leucine-zipper. At serine 418 the chain carries Phosphoserine.

The protein belongs to the N-acylglucosamine 2-epimerase family. As to quaternary structure, homodimer. Forms a heterodimer with renin and inhibits its activity. As to expression, kidney, adrenal gland, brain, lung, spleen, ovary, testis and heart.

The catalysed reaction is an N-acyl-D-glucosamine = an N-acyl-D-mannosamine. Its pathway is amino-sugar metabolism; N-acetylneuraminate degradation. In terms of biological role, catalyzes the interconversion of N-acetylglucosamine to N-acetylmannosamine. Involved in the N-glycolylneuraminic acid (Neu5Gc) degradation pathway. The chain is N-acylglucosamine 2-epimerase (Renbp) from Rattus norvegicus (Rat).